The sequence spans 341 residues: Anthranilate phosphoribosyltransferase (341 aa).

5-phospho-alpha-D-ribose 1-diphosphate-binding positions include glycine 79, 82 to 83 (GD), threonine 87, 89 to 92 (NIST), 107 to 115 (KHGNRAVSS), and serine 119. Glycine 79 is an anthranilate binding site. Serine 91 contacts Mg(2+). Position 110 (asparagine 110) interacts with anthranilate. Residue arginine 165 participates in anthranilate binding. Mg(2+) is bound by residues aspartate 224 and glutamate 225.

The protein belongs to the anthranilate phosphoribosyltransferase family. Homodimer. Mg(2+) serves as cofactor.

The enzyme catalyses N-(5-phospho-beta-D-ribosyl)anthranilate + diphosphate = 5-phospho-alpha-D-ribose 1-diphosphate + anthranilate. It participates in amino-acid biosynthesis; L-tryptophan biosynthesis; L-tryptophan from chorismate: step 2/5. Its function is as follows. Catalyzes the transfer of the phosphoribosyl group of 5-phosphorylribose-1-pyrophosphate (PRPP) to anthranilate to yield N-(5'-phosphoribosyl)-anthranilate (PRA). The polypeptide is Anthranilate phosphoribosyltransferase (Bacillus mycoides (strain KBAB4) (Bacillus weihenstephanensis)).